Consider the following 3931-residue polypeptide: Replicase polyprotein 1ab (3931 aa).

The C4-type; atypical zinc finger occupies 8-28; the sequence is CTCTPNARVFVAEGQVYCTRC. Residues 69 to 182 are PCP1-alpha; that stretch reads ECSPAGACWL…FCPFECAMAD (114 aa). Residues cysteine 76 and histidine 146 each act as for nsp1-alpha papain-like cysteine proteinase activity in the active site. The segment at 199–200 is important for host EIF2AK2 inhibition; that stretch reads VS. Residues cysteine 270 and histidine 339 each act as for nsp1-beta papain-like cysteine proteinase activity in the active site. The interval 426-513 is OTU-like; that stretch reads LKRYSPPAEG…GEHWTVSVIP (88 aa). The 109-residue stretch at 428 to 536 folds into the Peptidase C33 domain; the sequence is RYSPPAEGNC…GCCEHKGGLV (109 aa). Catalysis depends on for nsp2 cysteine proteinase activity residues cysteine 437 and histidine 506. 2 disordered regions span residues 809-868 and 1118-1164; these read RWTP…VGGP and TDEL…TGGV. A compositionally biased stretch (pro residues) spans 810–819; the sequence is WTPPPPPPRV. Residues 1139 to 1151 show a composition bias toward basic and acidic residues; sequence PAKDPRMSPRESD. 3 helical membrane-spanning segments follow: residues 1221–1241, 1266–1286, and 1339–1359; these read SGYSPGDWGFAAFTLFCLFLC, GVFGCWLAFAVGLFKPVSDPV, and WHFLLRLGIVADCILAGAYVL. The interval 1236-1359 is HD1; that stretch reads FCLFLCYSYP…DCILAGAYVL (124 aa). A WCCH region spans residues 1414–1438; it reads TGWRGCWTGRSPIEQPSEKPIAFAQ. 5 helical membrane passes run 1554–1574, 1607–1627, 1629–1649, 1659–1679, and 1695–1715; these read IAALHVACSMALHMLAGVYVT, LCISQHGLTLPLTALVAGFGL, EIALVVLIFVSIGGMAHRLSC, AIASYVWVPLTWLLCVFPCWL, and FLISVNIPSGILAVVLLVSLW. The HD2 stretch occupies residues 1554–1715; it reads IAALHVACSM…LAVVLLVSLW (162 aa). Active-site charge relay system; for serine protease nsp4 activity residues include histidine 1818, aspartate 1843, and serine 1897. The next 4 membrane-spanning stretches (helical) occupy residues 2006-2026, 2030-2050, 2064-2084, and 2107-2127; these read WTPLVAVGFFILNEILPAVLV, FSFGMFVLSWLTPWSAQVLMI, LGFYSLGAVTSFVADLAVTQG, and SPVPVIACGVVHLLAIILYLF. An HD3 region spans residues 2006–2127; the sequence is WTPLVAVGFF…HLLAIILYLF (122 aa).

The protein belongs to the arteriviridae polyprotein family. In terms of assembly, nsp1-alpha papain-like: Interacts with host RNF31. As to quaternary structure, interacts with host EIF2AK2; this interaction occurs in host stress granules and leads to EIF2AK2 inhibition. Interacts with host G3BP1; this interaction probably plays a role in Nsp1-beta-mediated inhibition of host EIF2AK2. Interacts with host DDX18; this interaction redistributes host DDX18 to the cytoplasm. In terms of assembly, interacts with host IFITM1. As to quaternary structure, interacts with host DDX5. Interacts with host OTULIN. In terms of assembly, interacts with host LGALS3. Specific enzymatic cleavages in vivo by its own proteases yield mature proteins. Nsp1 is autocleaved into two subunits, Nsp1-alpha and Nsp1-beta. There are two alternative pathways for processing. Either nsp4-5 is cleaved, which represents the major pathway or the nsp5-6 and nsp6-7 are processed, which represents the minor pathway. The major pathway occurs when nsp2 acts as a cofactor for nsp4.

It localises to the host nucleus. Its subcellular location is the host cytoplasm. The protein resides in the host membrane. It is found in the host endoplasmic reticulum. The protein localises to the host perinuclear region. It catalyses the reaction RNA(n) + a ribonucleoside 5'-triphosphate = RNA(n+1) + diphosphate. The enzyme catalyses ATP + H2O = ADP + phosphate + H(+). It carries out the reaction Thiol-dependent hydrolysis of ester, thioester, amide, peptide and isopeptide bonds formed by the C-terminal Gly of ubiquitin (a 76-residue protein attached to proteins as an intracellular targeting signal).. The catalysed reaction is uridylyl-uridylyl-ribonucleotide-RNA = a 3'-end uridylyl-2',3'-cyclophospho-uridine-RNA + a 5'-end dephospho-ribonucleoside-RNA. In terms of biological role, contains the activities necessary for the transcription of negative stranded RNA, leader RNA, subgenomic mRNAs and progeny virion RNA as well as proteinases responsible for the cleavage of the polyprotein into functional products. Functionally, inhibits host IFN-beta production. Plays a role in the degradation of the host transcriptional activator CREBBP protein. The degradation of host CREBBP which is a key component of the IFN enhanceosome is likely responsible for the inhibition of interferon mediated by Nsp1-alpha. Also participates in the inhibition of host NF-kappa-B activation by counteracting LUBAC-dependent induction of NF-kappa-B. Reduces host NEMO ubiquitination by blocking the interaction between the two LUBAC complex components RNF31 and SHARPIN. Its function is as follows. Plays a role in blocking host mRNA nuclear export to the cytoplasm and subversion of host protein synthesis. Additionally, inhibits the interferon-activated JAK/STAT signal transduction by mediating the ubiquitination and subsequent proteasomal degradation of host KPNA1. Repurposes the host antiviral stress granules into a proviral platform to counteract the EIF2AK2/PKR restriction, thereby regulating the host inflammatory response. Multifunctional protein that acts as a viral protease and as a viral antagonist of host immune response. Cleaves the nsp2/nsp3 site in the viral polyprotein. Displays deubiquitinating activity that cleaves both ubiquitinated and ISGylated products and therefore inhibits ubiquitin and ISG15-dependent host innate immunity. Also deubiquinates host NFKBIA, thereby interfering with NFKBIA degradation and impairing subsequent NF-kappa-B activation. In terms of biological role, plays a role in the inhibition of the immune response by interacting with host IFITM1. This interaction leads to the proteasomal degradation of the IFN-induced antiviral protein IFITM1. Functionally, cleaves the majority of cleavage sites present in the C-terminus of the polyprotein. Triggers host apoptosis through caspase-3, -8, and -9 activations. Subverts host innate immune responses through its protease activity. Targets the NF-kappa-B essential modulator NEMO and mediates its cleavage. Blocks host interferon beta induction and downstream signaling by cleaving mitochondrial MAVS, dislodging it from the mitochondria. Impairs host defense by cleaving host mRNA-decapping enzyme DCP1A to attenuate its antiviral activity. Its function is as follows. Plays a role in the initial induction of autophagosomes from host endoplasmic reticulum. Plays a role in the inhibition of host STAT3 signaling pathway by inducing the degradation of STAT3. In terms of biological role, responsible for replication and transcription of the viral RNA genome. Functionally, displays RNA and DNA duplex-unwinding activities with 5' to 3' polarity. Its function is as follows. Plays a role in viral transcription/replication and prevents the simultaneous activation of host cell dsRNA sensors, such as MDA5/IFIH1, OAS, PKR and NLRP3 inflammasome. Acts by degrading the 5'-polyuridines generated during replication of the poly(A) region of viral genomic and subgenomic RNAs. Catalyzes a two-step reaction in which a 2'3'-cyclic phosphate (2'3'-cP) is first generated by 2'-O transesterification, which is then hydrolyzed to a 3'-phosphate (3'-P). If not degraded, poly(U) RNA would hybridize with poly(A) RNA tails and activate host dsRNA sensors. Also plays a role in the inhibition of host type I interferon production by recruiting host OTULIN to promote removal of linear ubiquitination targeting host NEMO. In Porcine reproductive and respiratory syndrome virus (PRRSV), this protein is Replicase polyprotein 1ab.